The chain runs to 301 residues: Hydroxymycolate synthase MmaA4 (301 aa).

Residues 42-43 (YS), 81-83 (GCG), 103-108 (TLSKNQ), 132-133 (WE), and Ile-145 contribute to the S-adenosyl-L-methionine site. The active site involves Cys-278.

This sequence belongs to the CFA/CMAS family. As to quaternary structure, monomer.

The protein operates within lipid metabolism; mycolic acid biosynthesis. Involved in the biosynthesis of hydroxymycolate, a common precursor of oxygenated mycolic acids (methoxymycolate and ketomycolate). Probably transfers a methyl group from the S-adenosylmethionine (SAM) cofactor and, subsequently or simultaneously, a water molecule onto the double bound of ethylene substrates, leading to the formation of the hydroxylated product at the distal position. The sequence is that of Hydroxymycolate synthase MmaA4 (cmaA) from Mycobacterium bovis (strain ATCC BAA-935 / AF2122/97).